We begin with the raw amino-acid sequence, 83 residues long: Ferredoxin (83 aa).

2 4Fe-4S ferredoxin-type domains span residues 2–29 (ALMI…QGDE) and 31–64 (YVIE…KDPS). [4Fe-4S] cluster contacts are provided by Cys-9, Cys-12, Cys-15, Cys-19, Cys-38, Cys-41, Cys-50, and Cys-54.

It depends on [4Fe-4S] cluster as a cofactor.

Its function is as follows. Ferredoxins are iron-sulfur proteins that transfer electrons in a wide variety of metabolic reactions. The protein is Ferredoxin (fdx) of Allochromatium vinosum (strain ATCC 17899 / DSM 180 / NBRC 103801 / NCIMB 10441 / D) (Chromatium vinosum).